The following is a 130-amino-acid chain: uncharacterized protein (130 aa).

The N-terminal stretch at 1 to 20 is a signal peptide; that stretch reads MFNCLTKLVILVCLKYVAKA.

This is an uncharacterized protein from Saccharomyces cerevisiae (strain ATCC 204508 / S288c) (Baker's yeast).